We begin with the raw amino-acid sequence, 739 residues long: NAD(P)H-quinone oxidoreductase subunit 5, chloroplastic (739 aa).

The next 16 membrane-spanning stretches (helical) occupy residues 9 to 29 (WIIP…LLLV), 39 to 59 (IWAF…ADLA), 89 to 109 (IDPL…MVLI), 125 to 145 (FAYM…SNLI), 147 to 167 (IYIF…FWFT), 185 to 205 (GDFG…SFEF), 224 to 244 (LFAA…SAQF), 258 to 278 (TPIS…FLVA), 280 to 300 (LLPL…IGII), 327 to 347 (LGYI…FHLI), 354 to 374 (ALLF…VGYS), 396 to 416 (TTFF…CFWS), 425 to 445 (WLYS…TAFY), 544 to 564 (LFPM…GIPF), 603 to 623 (IYSV…YGSV), and 716 to 736 (ISSY…IYYF).

It belongs to the complex I subunit 5 family. NDH is composed of at least 16 different subunits, 5 of which are encoded in the nucleus.

It localises to the plastid. It is found in the chloroplast thylakoid membrane. It carries out the reaction a plastoquinone + NADH + (n+1) H(+)(in) = a plastoquinol + NAD(+) + n H(+)(out). The catalysed reaction is a plastoquinone + NADPH + (n+1) H(+)(in) = a plastoquinol + NADP(+) + n H(+)(out). Its function is as follows. NDH shuttles electrons from NAD(P)H:plastoquinone, via FMN and iron-sulfur (Fe-S) centers, to quinones in the photosynthetic chain and possibly in a chloroplast respiratory chain. The immediate electron acceptor for the enzyme in this species is believed to be plastoquinone. Couples the redox reaction to proton translocation, and thus conserves the redox energy in a proton gradient. This Acorus calamus (Sweet flag) protein is NAD(P)H-quinone oxidoreductase subunit 5, chloroplastic (ndhF).